A 427-amino-acid chain; its full sequence is UPF0229 protein YeaH (427 aa).

Over residues 79-90 (NDHFVQNDRIER) the composition is skewed to basic and acidic residues. Residues 79-110 (NDHFVQNDRIERPQGGGGGSGSGQGQASQDGE) are disordered. Positions 92 to 102 (QGGGGGSGSGQ) are enriched in gly residues.

It belongs to the UPF0229 family.

The polypeptide is UPF0229 protein YeaH (Escherichia coli O9:H4 (strain HS)).